The following is a 374-amino-acid chain: Diels-Alderase fsa2 (374 aa).

The beta-sandwich motif stretch occupies residues 1–216; that stretch reads MSNVTVSAFT…MDRVWSPLSW (216 aa). The interval 216-374 is beta-barrel motif; that stretch reads WPQVMTESYY…VGTGGQCELS (159 aa).

It belongs to the Diels-Alderase family.

It catalyses the reaction (5S)-3-[(2E,6R,8E,10E,12E)-2,6-dimethyltetradeca-2,8,10,12-tetraenoyl]-5-(hydroxymethyl)pyrrolidine-2,4-dione = trichosetin. The protein operates within mycotoxin biosynthesis. In terms of biological role, diels-Alderase; part of the gene cluster that mediates the biosynthesis of the HIV-1 integrase inhibitor equisetin and of fusarisetin A, both trans-fused decalin-containing tetramic acids showing also antimicrobial activity. The PKS module of fsa1 together with the enoylreductase fsa3 catalyze the formation of the polyketide unit which is then conjugated to L-serine by the condensation domain of the fsa1 NRPS module. Activity of the Dieckmann cyclase domain (RED) results in release of the Dieckmann product intermediate. Diels-Alderase fsa2 is involved in endo-selective Diels-Alder cycloaddition to form the decalin ring, leading to the production of N-desmethylequisetin also called trichosetin. Subsequent N-methylation is carried out by fsa4 to give equisetin. The enzymatic gene responsible for the conversion of equisetin to fusarisetin A has not been identified yet and is probably located outside of the fsa cluster. This chain is Diels-Alderase fsa2, found in Fusarium sp. (strain FN080326).